The following is a 730-amino-acid chain: Patatin-like phospholipase domain-containing protein CIMG_04897 (730 aa).

The segment covering 1-11 has biased composition (basic residues); the sequence is MTANSSRRRLQ. The tract at residues 1–26 is disordered; sequence MTANSSRRRLQMKSPRTDGDEKEEDY. Residues 97–117 form a helical membrane-spanning segment; sequence WPFLLFVLSWIVFLGALYILT. Residues 281 to 472 form the PNPLA domain; that stretch reads LCLSGGATLA…RTDIPLKALD (192 aa). The short motif at 312 to 316 is the GXSXG element; the sequence is GTSGG. Catalysis depends on S314, which acts as the Nucleophile. D459 (proton acceptor) is an active-site residue. Positions 667–730 are disordered; the sequence is GHFREAPTSH…QGQSSGTKIG (64 aa). A compositionally biased stretch (polar residues) spans 721–730; the sequence is QGQSSGTKIG.

The protein belongs to the PLPL family.

It is found in the membrane. Functionally, probable lipid hydrolase. The polypeptide is Patatin-like phospholipase domain-containing protein CIMG_04897 (Coccidioides immitis (strain RS) (Valley fever fungus)).